We begin with the raw amino-acid sequence, 293 residues long: Probable endonuclease 4 (293 aa).

H75, H115, E153, D187, H190, H224, D237, H239, and E269 together coordinate Zn(2+).

The protein belongs to the AP endonuclease 2 family. It depends on Zn(2+) as a cofactor.

It carries out the reaction Endonucleolytic cleavage to 5'-phosphooligonucleotide end-products.. Its function is as follows. Endonuclease IV plays a role in DNA repair. It cleaves phosphodiester bonds at apurinic or apyrimidinic (AP) sites, generating a 3'-hydroxyl group and a 5'-terminal sugar phosphate. The protein is Probable endonuclease 4 of Chlamydia pneumoniae (Chlamydophila pneumoniae).